A 298-amino-acid chain; its full sequence is Apolipoprotein E (298 aa).

A signal peptide spans 1 to 18 (MKVLWAALVVTLLAGCRA). Repeat copies occupy residues 74–94 (LLIEDTMKEVKDYKAELEKEL), 95–116 (GPVAEDTKARLAKELQAAQARL), 117–138 (GADMEEVRNRLSQYRSEVQAML), 139–160 (GQSSEELRARLTSHLRKMRKRL), 161–182 (QRDIDELQKRMAVYKAGAQEGA), 183–203 (ERGVSAIRERLGSLIEQGRLQ), 204–221 (ALTSQPLQERAQAWGEQM), and 222–243 (RGRLEKVGSQARDRLEEVREQM). The tract at residues 95–243 (GPVAEDTKAR…DRLEEVREQM (149 aa)) is 8 X 22 AA approximate tandem repeats. At M137 the chain carries Methionine sulfoxide. S141 bears the Phosphoserine mark. Residues 151–161 (SHLRKMRKRLQ) are LDL and other lipoprotein receptors binding. 155-158 (KMRK) lines the heparin pocket. Residues 203–271 (QALTSQPLQE…KSWFEPMMED (69 aa)) are lipid-binding and lipoprotein association. Heparin is bound at residue 217–224 (WGEQMRGR). The tract at residues 259-271 (ARLKSWFEPMMED) is specificity for association with VLDL.

The protein belongs to the apolipoprotein A1/A4/E family. In terms of assembly, homotetramer. May interact with ABCA1; functionally associated with ABCA1 in the biogenesis of HDLs. May interact with APP/A4 amyloid-beta peptide; the interaction is extremely stable in vitro but its physiological significance is unclear. May interact with MAPT. May interact with MAP2. In the cerebrospinal fluid, interacts with secreted SORL1. Interacts with PMEL; this allows the loading of PMEL luminal fragment on ILVs to induce fibril nucleation. APOE exists as multiple glycosylated and sialylated glycoforms within cells and in plasma. The extent of glycosylation and sialylation are tissue and context specific. In terms of processing, glycated in plasma VLDL. Post-translationally, phosphorylated by FAM20C in the extracellular medium.

It localises to the secreted. The protein localises to the extracellular space. The protein resides in the extracellular matrix. Its subcellular location is the extracellular vesicle. It is found in the endosome. It localises to the multivesicular body. APOE is an apolipoprotein, a protein associating with lipid particles, that mainly functions in lipoprotein-mediated lipid transport between organs via the plasma and interstitial fluids. APOE is a core component of plasma lipoproteins and is involved in their production, conversion and clearance. Apolipoproteins are amphipathic molecules that interact both with lipids of the lipoprotein particle core and the aqueous environment of the plasma. As such, APOE associates with chylomicrons, chylomicron remnants, very low density lipoproteins (VLDL) and intermediate density lipoproteins (IDL) but shows a preferential binding to high-density lipoproteins (HDL). It also binds a wide range of cellular receptors including the LDL receptor/LDLR, the LDL receptor-related proteins LRP1, LRP2 and LRP8 and the very low-density lipoprotein receptor/VLDLR that mediate the cellular uptake of the APOE-containing lipoprotein particles. Finally, APOE also has a heparin-binding activity and binds heparan-sulfate proteoglycans on the surface of cells, a property that supports the capture and the receptor-mediated uptake of APOE-containing lipoproteins by cells. A main function of APOE is to mediate lipoprotein clearance through the uptake of chylomicrons, VLDLs, and HDLs by hepatocytes. APOE is also involved in the biosynthesis by the liver of VLDLs as well as their uptake by peripheral tissues ensuring the delivery of triglycerides and energy storage in muscle, heart and adipose tissues. By participating in the lipoprotein-mediated distribution of lipids among tissues, APOE plays a critical role in plasma and tissues lipid homeostasis. APOE is also involved in two steps of reverse cholesterol transport, the HDLs-mediated transport of cholesterol from peripheral tissues to the liver, and thereby plays an important role in cholesterol homeostasis. First, it is functionally associated with ABCA1 in the biogenesis of HDLs in tissues. Second, it is enriched in circulating HDLs and mediates their uptake by hepatocytes. APOE also plays an important role in lipid transport in the central nervous system, regulating neuron survival and sprouting. This is Apolipoprotein E (APOE) from Cavia tschudii (Montane guinea pig).